The chain runs to 624 residues: UvrABC system protein C (624 aa).

A GIY-YIG domain is found at 25 to 104 (AEPGVYFMRD…IKQHQPHFNV (80 aa)). The region spanning 214-249 (SELIDTLTPQMEAAAENLNFEQAARIRDQINGLKTL) is the UVR domain.

This sequence belongs to the UvrC family. Interacts with UvrB in an incision complex.

It localises to the cytoplasm. Its function is as follows. The UvrABC repair system catalyzes the recognition and processing of DNA lesions. UvrC both incises the 5' and 3' sides of the lesion. The N-terminal half is responsible for the 3' incision and the C-terminal half is responsible for the 5' incision. This chain is UvrABC system protein C, found in Cyanothece sp. (strain PCC 7425 / ATCC 29141).